The primary structure comprises 83 residues: Apolipoprotein C-I, acidic form (83 aa).

An N-terminal signal peptide occupies residues 1–26 (MRLFLSLPVLVVVLSMVLEGPAPAQG).

It belongs to the apolipoprotein C1 family.

Its subcellular location is the secreted. In terms of biological role, inhibitor of lipoprotein binding to the low density lipoprotein (LDL) receptor, LDL receptor-related protein, and very low density lipoprotein (VLDL) receptor. Associates with high density lipoproteins (HDL) and the triacylglycerol-rich lipoproteins in the plasma and makes up about 10% of the protein of the VLDL and 2% of that of HDL. Appears to interfere directly with fatty acid uptake and is also the major plasma inhibitor of cholesteryl ester transfer protein (CETP). Binds free fatty acids and reduces their intracellular esterification. Modulates the interaction of APOE with beta-migrating VLDL and inhibits binding of beta-VLDL to the LDL receptor-related protein. The sequence is that of Apolipoprotein C-I, acidic form (APOC1A) from Pongo abelii (Sumatran orangutan).